We begin with the raw amino-acid sequence, 84 residues long: Large ribosomal subunit protein bL27 (84 aa).

Residues 1–24 (MAHKKGAASTKNGRDSNSQRLGVK) are disordered. Residues 9–20 (STKNGRDSNSQR) are compositionally biased toward polar residues.

Belongs to the bacterial ribosomal protein bL27 family.

The protein is Large ribosomal subunit protein bL27 of Nocardioides sp. (strain ATCC BAA-499 / JS614).